Reading from the N-terminus, the 1755-residue chain is Transposon Ty1-JR2 Gag-Pol polyprotein (1755 aa).

Over residues 1 to 16 (MESQQLSQHSHISHGS) the composition is skewed to low complexity. Disordered stretches follow at residues 1-93 (MESQ…MMTQ), 126-173 (PQSQ…RPPP), and 352-421 (GSRN…SKST). 3 stretches are compositionally biased toward polar residues: residues 48-60 (TKAN…TPAS), 71-93 (SPQT…MMTQ), and 127-152 (QSQF…GNTF). The segment covering 153-165 (TDSSSADSDMTST) has biased composition (low complexity). The RNA-binding stretch occupies residues 299 to 401 (NNGIHINNKV…NSKSKTARAH (103 aa)). A compositionally biased stretch (low complexity) spans 402–418 (NVSTSNNSPSTDNDSIS). Ser-416 is modified (phosphoserine). Asp-461 functions as the For protease activity; shared with dimeric partner in the catalytic mechanism. The interval 583-640 (NVHTSESTRKYPYPFIHRMLAHANAQTIRYSLKNNTITYFNESDVDWSSAIDYQCPDC) is integrase-type zinc finger-like. The 176-residue stretch at 660–835 (NSYEPFQYLH…AGLDISTLLP (176 aa)) folds into the Integrase catalytic domain. Residues Asp-671 and Asp-736 each contribute to the Mg(2+) site. 3 disordered regions span residues 956-1087 (SKAV…ETEK), 1092-1111 (RSPS…NIVP), and 1130-1186 (DLPL…EDNE). Over residues 960–969 (SPTDSTPPST) the composition is skewed to low complexity. Residues 1005 to 1015 (STPQISNIEST) show a composition bias toward polar residues. A compositionally biased stretch (basic and acidic residues) spans 1038–1053 (ESSHASKSKDFRHSDS). Polar residues-rich tracts occupy residues 1054–1082 (YSEN…QISD) and 1101–1111 (PENNSSHNIVP). Positions 1178–1212 (KKRSLEDNETEIKVSRDTWNTKNMRSLEPPRSKKR) match the Bipartite nuclear localization signal motif. Residues 1338 to 1476 (NNYYITQLDI…DILGLEIKYQ (139 aa)) enclose the Reverse transcriptase Ty1/copia-type domain. Mg(2+) is bound by residues Asp-1346, Asp-1427, Asp-1428, Asp-1610, Glu-1652, and Asp-1685. The RNase H Ty1/copia-type domain maps to 1610 to 1752 (DASYGNQPYY…IKTFKLLTNK (143 aa)).

In terms of assembly, the capsid protein forms a homotrimer, from which the VLPs are assembled. The protease is a homodimer, whose active site consists of two apposed aspartic acid residues. In terms of processing, initially, virus-like particles (VLPs) are composed of the structural unprocessed proteins Gag and Gag-Pol, and also contain the host initiator methionine tRNA (tRNA(i)-Met) which serves as a primer for minus-strand DNA synthesis, and a dimer of genomic Ty RNA. Processing of the polyproteins occurs within the particle and proceeds by an ordered pathway, called maturation. First, the protease (PR) is released by autocatalytic cleavage of the Gag-Pol polyprotein yielding capsid protein p45 and a Pol-p154 precursor protein. This cleavage is a prerequisite for subsequent processing of Pol-p154 at the remaining sites to release the mature structural and catalytic proteins. Maturation takes place prior to the RT reaction and is required to produce transposition-competent VLPs.

The protein localises to the cytoplasm. It localises to the nucleus. The enzyme catalyses DNA(n) + a 2'-deoxyribonucleoside 5'-triphosphate = DNA(n+1) + diphosphate. It carries out the reaction Endonucleolytic cleavage to 5'-phosphomonoester.. In terms of biological role, capsid protein (CA) is the structural component of the virus-like particle (VLP), forming the shell that encapsulates the retrotransposons dimeric RNA genome. The particles are assembled from trimer-clustered units and there are holes in the capsid shells that allow for the diffusion of macromolecules. CA also has nucleocapsid-like chaperone activity, promoting primer tRNA(i)-Met annealing to the multipartite primer-binding site (PBS), dimerization of Ty1 RNA and initiation of reverse transcription. Its function is as follows. The aspartyl protease (PR) mediates the proteolytic cleavages of the Gag and Gag-Pol polyproteins after assembly of the VLP. Reverse transcriptase/ribonuclease H (RT) is a multifunctional enzyme that catalyzes the conversion of the retro-elements RNA genome into dsDNA within the VLP. The enzyme displays a DNA polymerase activity that can copy either DNA or RNA templates, and a ribonuclease H (RNase H) activity that cleaves the RNA strand of RNA-DNA heteroduplexes during plus-strand synthesis and hydrolyzes RNA primers. The conversion leads to a linear dsDNA copy of the retrotransposon that includes long terminal repeats (LTRs) at both ends. Functionally, integrase (IN) targets the VLP to the nucleus, where a subparticle preintegration complex (PIC) containing at least integrase and the newly synthesized dsDNA copy of the retrotransposon must transit the nuclear membrane. Once in the nucleus, integrase performs the integration of the dsDNA into the host genome. This chain is Transposon Ty1-JR2 Gag-Pol polyprotein (TY1B-JR2), found in Saccharomyces cerevisiae (strain ATCC 204508 / S288c) (Baker's yeast).